We begin with the raw amino-acid sequence, 56 residues long: Ovomucoid (56 aa).

The Kazal-like domain maps to 6–56; the sequence is VDCSEYPKPACTMEQRPLCGSDNKTYGNKCNFCNAVVESNGTLTLSHFGKC. Cystine bridges form between Cys8-Cys38, Cys16-Cys35, and Cys24-Cys56. An N-linked (GlcNAc...) asparagine glycan is attached at Asn45.

The protein resides in the secreted. The sequence is that of Ovomucoid from Afropavo congensis (Congo peafowl).